Here is a 167-residue protein sequence, read N- to C-terminus: MEAIIKPQEVKVGIAEWQVLRAPGRLITLGLGSCVGIALYDSLNRMGGLAHIMLPDSSQFQDRSNRAKFADLAILDLVAALIGRGARRGRLVAKIAGGAQMFTSGDRHLSLLNIGQRNAAMVRQTLQELAIPLVAEDTGGNYGRTMIFDLESGDVLIRTIGRPLKVI.

The protein belongs to the CheD family.

The catalysed reaction is L-glutaminyl-[protein] + H2O = L-glutamyl-[protein] + NH4(+). Probably deamidates glutamine residues to glutamate on methyl-accepting chemotaxis receptors (MCPs), playing an important role in chemotaxis. In Moorella thermoacetica (strain ATCC 39073 / JCM 9320), this protein is Probable chemoreceptor glutamine deamidase CheD.